We begin with the raw amino-acid sequence, 250 residues long: Snake venom serine protease pictobin (250 aa).

An N-terminal signal peptide occupies residues 1–11 (ANLLILQVSYA). The propeptide occupies 12-17 (QKSSEL). The Peptidase S1 domain maps to 18–241 (VIGGDECNIN…HLHWILSIIA (224 aa)). 5 cysteine pairs are disulfide-bonded: Cys-24-Cys-155, Cys-42-Cys-58, Cys-134-Cys-202, Cys-166-Cys-181, and Cys-192-Cys-217. The active-site Charge relay system is the His-57. 2 N-linked (GlcNAc...) asparagine glycosylation sites follow: Asn-71 and Asn-95. Asp-102 serves as the catalytic Charge relay system. N-linked (GlcNAc...) asparagine glycosylation is found at Asn-146 and Asn-162. The active-site Charge relay system is Ser-196. Asn-243 is a glycosylation site (N-linked (GlcNAc...) asparagine).

Belongs to the peptidase S1 family. Snake venom subfamily. Monomer. In terms of tissue distribution, expressed by the venom gland.

It localises to the secreted. Its function is as follows. Snake venom serine protease that may impair the hemostatic system of the prey. This is Snake venom serine protease pictobin from Bothrops pictus (Desert lancehead).